The chain runs to 287 residues: Arylamine N-acetyltransferase, liver isozyme (287 aa).

Cys68 functions as the Acyl-thioester intermediate in the catalytic mechanism. Residues His107 and Asp122 contribute to the active site.

It belongs to the arylamine N-acetyltransferase family.

It catalyses the reaction an arylamine + acetyl-CoA = an N-acetylarylamine + CoA. This is Arylamine N-acetyltransferase, liver isozyme from Gallus gallus (Chicken).